Reading from the N-terminus, the 428-residue chain is Kynureninase (428 aa).

Pyridoxal 5'-phosphate is bound by residues threonine 104, threonine 105, 132–135 (FPSD), aspartate 213, histidine 216, and tyrosine 238. Lysine 239 carries the post-translational modification N6-(pyridoxal phosphate)lysine. Residues tryptophan 267 and threonine 295 each coordinate pyridoxal 5'-phosphate.

The protein belongs to the kynureninase family. Homodimer. Pyridoxal 5'-phosphate serves as cofactor.

It catalyses the reaction L-kynurenine + H2O = anthranilate + L-alanine + H(+). It carries out the reaction 3-hydroxy-L-kynurenine + H2O = 3-hydroxyanthranilate + L-alanine + H(+). Its pathway is amino-acid degradation; L-kynurenine degradation; L-alanine and anthranilate from L-kynurenine: step 1/1. The protein operates within cofactor biosynthesis; NAD(+) biosynthesis; quinolinate from L-kynurenine: step 2/3. Functionally, catalyzes the cleavage of L-kynurenine (L-Kyn) and L-3-hydroxykynurenine (L-3OHKyn) into anthranilic acid (AA) and 3-hydroxyanthranilic acid (3-OHAA), respectively. The polypeptide is Kynureninase (Geobacillus thermodenitrificans (strain NG80-2)).